We begin with the raw amino-acid sequence, 685 residues long: Sodium-dependent phosphate transporter 1-B (685 aa).

The next 6 membrane-spanning stretches (helical) occupy residues 21-41 (IMAP…VLAF), 66-86 (ACIL…AKVS), 106-126 (LMAG…AASF), 162-182 (IVLS…LLFF), 207-227 (ACTI…LLGF), and 234-254 (GIIL…WFFV). The interval 489–511 (EGCIEDVVTDRKSSSSSLEERHD) is disordered. Positions 496 to 511 (VTDRKSSSSSLEERHD) are enriched in basic and acidic residues. The next 4 membrane-spanning stretches (helical) occupy residues 517-537 (VSLL…FAHG), 565-585 (ATPI…LWVW), 606-626 (FSIE…GLPI), and 656-676 (IFLA…GIMA).

This sequence belongs to the inorganic phosphate transporter (PiT) (TC 2.A.20) family.

The protein localises to the membrane. In terms of biological role, sodium-phosphate symporter which plays a fundamental housekeeping role in phosphate transport. The sequence is that of Sodium-dependent phosphate transporter 1-B (slc20a1-b) from Xenopus laevis (African clawed frog).